A 255-amino-acid polypeptide reads, in one-letter code: MGNGDWSSKWPNDHLFIDDFGKLVWFDVLTDIVKISHFVSQVPTDLSPIPSSYISFIDGRIPMCINHLGWVYIRVKFESEEVFYQKFGEVDVSRFGESELPPDFEVTFSKVTTLVNKSLVRKSELLEKMNNELKQELTNKLDSLEKVNVQLKKELSQAQQSNFTELRDGLILNFSKVGGRIHRMVVRSIQNQLKLVSEINNDGDRWATMGATVILKEGAQYLGFVVVKNDGKIGVKFDLTRLNSLDNQTLLASVV.

The protein belongs to the tobravirus protein 2b family.

It is found in the virion. Its function is as follows. May function by interacting with a small, flexible domain located at the C-terminus of the CP, forming a bridge between the virus particle and the internal surface of the vector nematode feeding apparatus. In Tobacco rattle virus (strain TCM), this protein is Protein 2b.